A 312-amino-acid chain; its full sequence is Probable deoxyhypusine synthase (312 aa).

The active-site Nucleophile is Lys-285.

It belongs to the deoxyhypusine synthase family. The cofactor is NAD(+).

It carries out the reaction [eIF5A protein]-L-lysine + spermidine = [eIF5A protein]-deoxyhypusine + propane-1,3-diamine. It participates in protein modification; eIF5A hypusination. Catalyzes the NAD-dependent oxidative cleavage of spermidine and the subsequent transfer of the butylamine moiety of spermidine to the epsilon-amino group of a specific lysine residue of the eIF-5A precursor protein to form the intermediate deoxyhypusine residue. The protein is Probable deoxyhypusine synthase of Saccharolobus islandicus (strain Y.N.15.51 / Yellowstone #2) (Sulfolobus islandicus).